The chain runs to 182 residues: NADH-quinone oxidoreductase subunit I (182 aa).

4Fe-4S ferredoxin-type domains are found at residues 50-82 (IILSRDPDGDERCVACNLCAVACPVGCISLQKA) and 92-121 (EFFRINFSRCIFCGLCEEACPTTAIQMTPD). Residues Cys-62, Cys-65, Cys-68, Cys-72, Cys-101, Cys-104, Cys-107, and Cys-111 each contribute to the [4Fe-4S] cluster site.

The protein belongs to the complex I 23 kDa subunit family. NDH-1 is composed of 14 different subunits. Subunits NuoA, H, J, K, L, M, N constitute the membrane sector of the complex. It depends on [4Fe-4S] cluster as a cofactor.

The protein resides in the cell inner membrane. The catalysed reaction is a quinone + NADH + 5 H(+)(in) = a quinol + NAD(+) + 4 H(+)(out). Its function is as follows. NDH-1 shuttles electrons from NADH, via FMN and iron-sulfur (Fe-S) centers, to quinones in the respiratory chain. The immediate electron acceptor for the enzyme in this species is believed to be ubiquinone. Couples the redox reaction to proton translocation (for every two electrons transferred, four hydrogen ions are translocated across the cytoplasmic membrane), and thus conserves the redox energy in a proton gradient. The sequence is that of NADH-quinone oxidoreductase subunit I from Psychrobacter arcticus (strain DSM 17307 / VKM B-2377 / 273-4).